A 314-amino-acid polypeptide reads, in one-letter code: Formylglycine-generating enzyme (314 aa).

Residues 1 to 20 show a composition bias toward low complexity; sequence MAVAAPSPAAAAEPGPAARP. A disordered region spans residues 1–31; it reads MAVAAPSPAAAAEPGPAARPRSTRGQVRLPG. Ca(2+)-binding residues include Asn-194, Ile-195, Asp-208, and His-210. The Cu(2+) site is built by Cys-272 and Cys-277.

This sequence belongs to the sulfatase-modifying factor family. The cofactor is Cu(2+).

The enzyme catalyses L-cysteinyl-[sulfatase] + 2 a thiol + O2 = an organic disulfide + 3-oxo-L-alanyl-[sulfatase] + hydrogen sulfide + H2O + H(+). It participates in protein modification; sulfatase oxidation. In terms of biological role, oxidase that catalyzes the conversion of cysteine to 3-oxoalanine on target proteins. 3-oxoalanine modification, which is also named formylglycine (fGly), occurs in the maturation of arylsulfatases and some alkaline phosphatases that use the hydrated form of 3-oxoalanine as a catalytic nucleophile. The protein is Formylglycine-generating enzyme of Streptomyces coelicolor (strain ATCC BAA-471 / A3(2) / M145).